A 264-amino-acid polypeptide reads, in one-letter code: Small ribosomal subunit protein uS2 (264 aa).

The protein belongs to the universal ribosomal protein uS2 family.

The chain is Small ribosomal subunit protein uS2 from Synechococcus sp. (strain JA-2-3B'a(2-13)) (Cyanobacteria bacterium Yellowstone B-Prime).